We begin with the raw amino-acid sequence, 627 residues long: MISLDSLRSLVTGLGTSKDKGASASYYFQPLGPDELNAMHRGDWLAQKVIDIIPNDMTREWRNWQAKQPQIEKIEAVEKAPLINLQVKVNLALKMARLHGGSVIYIGIKGTVDLSEPLDPRSIGRGDLAYLHVLSRYEVTCGETVTDVTSEFYGQPSYYEVAGANGAPVQIHPSRVVRFVGAPVLDRRSVGNDPWGDSVLQAVYDAVRNAGSAQGHIAALIPEAKVDIIHMPGLGEFTKTEAGRAKLTARFTYANTMKSMLNAVLLDGTGGAGKDAGGEKWEQKQISFAQLPELLQSYLSIASAAADIPATRMLSQSPKGLNATGDSDMRNHYDNCTARQGTELSPALNRLDEVILRSALGSRPAAIYYEWAPLWGLTEKEQAEVFKMKADGARALAGAKGGPLLPVNALSDALVNTFTEDGSLPGLEAAIEEHGTLADQPETESANENTEQPESGEEGEEGQPTRRAANDAKPRPLYVSRKLINGREFLKWAKEQGFAKTLKADDLHVTITYSREAVDWMAMGQSWGGEDGKLTVPAGGARLVEPLGDEGAVVLLFNSSELAWRHMGMREAGASWDHPEYQPHVTITYEVGDVDLSQVEPYRGKLVFGPEVFEEIDECWAENLNET.

Residue tyrosine 105 coordinates 3',3'-cGAMP. Tyrosine 105 provides a ligand contact to 3',3'-cUAMP. A disordered region spans residues 437-474; the sequence is LADQPETESANENTEQPESGEEGEEGQPTRRAANDAKP. Catalysis depends on residues histidine 508, threonine 510, histidine 584, and threonine 586. 2 residues coordinate 3',3'-cGAMP: glutamate 614 and tryptophan 620. Glutamate 614 and tryptophan 620 together coordinate 3',3'-cUAMP.

Belongs to the anti-CBASS protein Acb1 family.

The catalysed reaction is 3',3'-cUAMP + H2O = U[3'-5']pAp[3'] + H(+). The enzyme catalyses 3',3',3'-c-tri-AMP + H2O = A[3'-5']pA[3'-5']pAp[3'] + H(+). It carries out the reaction 3',3',3'-cAAG + H2O = G[3'-5']pA[3'-5']pAp[3'] + H(+). It catalyses the reaction 3',3',3'-cAAG + H2O = A[3'-5']pG[3'-5']pAp[3'] + H(+). The catalysed reaction is 3',3'-cGAMP + H2O = G[3'-5']pAp[3'] + H(+). Counteracts or regulates the endogenous CBASS antiviral defense system. Phosphodiesterase that enables metal-independent hydrolysis of the host cyclic di- and trinucleotide CBASS signals such as 3'3'-cGAMP, 3'3'cUA, and 3'3'3'-cAAA. In Caulobacter sp. (strain RHG1), this protein is Anti-CBASS protein Acb1.